The primary structure comprises 210 residues: Small ribosomal subunit protein uS3 (210 aa).

The region spanning leucine 38–arginine 106 is the KH type-2 domain.

Belongs to the universal ribosomal protein uS3 family. As to quaternary structure, part of the 30S ribosomal subunit. Forms a tight complex with proteins S10 and S14.

In terms of biological role, binds the lower part of the 30S subunit head. Binds mRNA in the 70S ribosome, positioning it for translation. In Geotalea daltonii (strain DSM 22248 / JCM 15807 / FRC-32) (Geobacter daltonii), this protein is Small ribosomal subunit protein uS3.